A 256-amino-acid polypeptide reads, in one-letter code: Low molecular mass lipoprotein PBMHP-6 (256 aa).

The signal sequence occupies residues 1-19 (MRLTLFAFVLAVCALASNA).

It belongs to the 30 kDa lipoprotein family.

It localises to the secreted. The sequence is that of Low molecular mass lipoprotein PBMHP-6 from Bombyx mori (Silk moth).